The primary structure comprises 207 residues: Protein LURP1 (207 aa).

Belongs to the LOR family. Limited to discrete pathogen infection sites in leaves.

Involved in basal defense against virulent oomycetes. Might be related to the phospholipid scramblase and tubby-like superfamily of membrane tethered transcription factors. The sequence is that of Protein LURP1 (LURP1) from Arabidopsis thaliana (Mouse-ear cress).